A 450-amino-acid chain; its full sequence is Phosphoglucosamine mutase (450 aa).

Ser-101 functions as the Phosphoserine intermediate in the catalytic mechanism. Residues Ser-101, Asp-242, Asp-244, and Asp-246 each contribute to the Mg(2+) site. Residue Ser-101 is modified to Phosphoserine.

The protein belongs to the phosphohexose mutase family. It depends on Mg(2+) as a cofactor. In terms of processing, activated by phosphorylation.

It carries out the reaction alpha-D-glucosamine 1-phosphate = D-glucosamine 6-phosphate. Catalyzes the conversion of glucosamine-6-phosphate to glucosamine-1-phosphate. The chain is Phosphoglucosamine mutase from Rhodopseudomonas palustris (strain BisA53).